Here is a 145-residue protein sequence, read N- to C-terminus: Snaclec salmorin subunit B (145 aa).

An N-terminal signal peptide occupies residues 1-23 (MGRFIFVSFGLLVVFVSLSGTGA). 3 disulfides stabilise this stretch: Cys-25-Cys-36, Cys-53-Cys-141, and Cys-118-Cys-133. A C-type lectin domain is found at 32–142 (YEGHCYKLFN…CRMEAYFVCE (111 aa)). Ca(2+)-binding residues include Ser-64 and Glu-70. Glu-142 serves as a coordination point for Ca(2+).

Belongs to the snaclec family. Heterodimer of subunits A and B; disulfide-linked. In terms of tissue distribution, expressed by the venom gland.

The protein resides in the secreted. In terms of biological role, inhibits thrombin-induced fibrinogen clotting and factor Xa-induced prothrombin activation. Binds to thrombin and prothrombin exosites. This is Snaclec salmorin subunit B from Gloydius brevicauda (Korean slamosa snake).